Here is a 124-residue protein sequence, read N- to C-terminus: Large ribosomal subunit protein bL12 (124 aa).

Belongs to the bacterial ribosomal protein bL12 family. As to quaternary structure, homodimer. Part of the ribosomal stalk of the 50S ribosomal subunit. Forms a multimeric L10(L12)X complex, where L10 forms an elongated spine to which 2 to 4 L12 dimers bind in a sequential fashion. Binds GTP-bound translation factors.

Its function is as follows. Forms part of the ribosomal stalk which helps the ribosome interact with GTP-bound translation factors. Is thus essential for accurate translation. The chain is Large ribosomal subunit protein bL12 from Sulfurovum sp. (strain NBC37-1).